We begin with the raw amino-acid sequence, 347 residues long: Chlorophyll a/b light-harvesting protein PcbB (347 aa).

Transmembrane regions (helical) follow at residues Gly-25–Ile-45, Leu-64–Val-84, Ala-91–Val-111, Leu-206–Thr-226, Leu-247–Val-267, and Leu-308–Ile-328.

It belongs to the PsbB/PsbC family. IsiA/Pcb subfamily. As to quaternary structure, the antenna complex consists of chlorophylls (a and b) and chlorophyll a/b binding proteins. The cofactor is chlorophyll a. Chlorophyll b serves as cofactor.

The protein localises to the cellular thylakoid membrane. Its function is as follows. The antenna complex functions as a light receptor, it captures and delivers excitation energy to photosystems II and I. The Prochlorales pcb genes are not related to higher plant LHCs. The polypeptide is Chlorophyll a/b light-harvesting protein PcbB (pcbB) (Prochlorothrix hollandica).